We begin with the raw amino-acid sequence, 158 residues long: Probable cyclic pyranopterin monophosphate synthase (158 aa).

Substrate contacts are provided by residues 75 to 77 (MCH) and 111 to 112 (ME). D126 is a catalytic residue.

The protein belongs to the MoaC family. Homohexamer; trimer of dimers.

The enzyme catalyses (8S)-3',8-cyclo-7,8-dihydroguanosine 5'-triphosphate = cyclic pyranopterin phosphate + diphosphate. Its pathway is cofactor biosynthesis; molybdopterin biosynthesis. Catalyzes the conversion of (8S)-3',8-cyclo-7,8-dihydroguanosine 5'-triphosphate to cyclic pyranopterin monophosphate (cPMP). This Methanocorpusculum labreanum (strain ATCC 43576 / DSM 4855 / Z) protein is Probable cyclic pyranopterin monophosphate synthase.